A 1508-amino-acid polypeptide reads, in one-letter code: uncharacterized protein (1508 aa).

Residues Ala149–Thr267 adopt a coiled-coil conformation. Disordered stretches follow at residues Glu248 to Glu268, Ser345 to Ser403, Phe536 to Leu575, Gly725 to His754, and Glu868 to Trp916. Basic and acidic residues predominate over residues Glu868 to Gly881. Positions Ile972 to Ala1034 form a coiled coil. Disordered stretches follow at residues Leu1158 to Arg1186 and Lys1204 to Pro1246. The span at Thr1163 to Ser1172 shows a compositional bias: polar residues. Over residues Lys1204–Pro1215 the composition is skewed to basic and acidic residues. The segment covering Ala1220–Asn1230 has biased composition (polar residues). Residues His1271–Ala1302 adopt a coiled-coil conformation.

This is an uncharacterized protein from Homo sapiens (Human).